The sequence spans 685 residues: Potassium-transporting ATPase ATP-binding subunit (685 aa).

4 helical membrane passes run 36 to 56 (MFVV…PSIF), 68 to 88 (LIVT…ESVA), 218 to 238 (IALN…LVAL), and 255 to 275 (IALL…AIGI). The active-site 4-aspartylphosphate intermediate is the aspartate 306. Residues aspartate 343, glutamate 347, 375–382 (FTAQTRMS), and lysine 394 contribute to the ATP site. Mg(2+)-binding residues include aspartate 517 and aspartate 521. The next 3 helical transmembrane spans lie at 587–607 (FAII…MNIM), 615–635 (AILS…PIAM), and 654–674 (IVFG…IDMI).

Belongs to the cation transport ATPase (P-type) (TC 3.A.3) family. Type IA subfamily. In terms of assembly, the system is composed of three essential subunits: KdpA, KdpB and KdpC.

It localises to the cell membrane. It carries out the reaction K(+)(out) + ATP + H2O = K(+)(in) + ADP + phosphate + H(+). Part of the high-affinity ATP-driven potassium transport (or Kdp) system, which catalyzes the hydrolysis of ATP coupled with the electrogenic transport of potassium into the cytoplasm. This subunit is responsible for energy coupling to the transport system and for the release of the potassium ions to the cytoplasm. The chain is Potassium-transporting ATPase ATP-binding subunit from Clostridium acetobutylicum (strain ATCC 824 / DSM 792 / JCM 1419 / IAM 19013 / LMG 5710 / NBRC 13948 / NRRL B-527 / VKM B-1787 / 2291 / W).